A 486-amino-acid polypeptide reads, in one-letter code: uncharacterized protein (486 aa).

Belongs to the UbiD family.

This is an uncharacterized protein from Aquifex aeolicus (strain VF5).